The sequence spans 314 residues: Olfactory receptor 5P68 (314 aa).

Topologically, residues 1–28 (MAFLHNGNHTAVTEFILLGLTDDPVFRV) are extracellular. An N-linked (GlcNAc...) asparagine glycan is attached at Asn-8. A helical transmembrane segment spans residues 29–49 (ILFTIILCIYLVTVSGNLSTI). Over 50–57 (LLIRVSSQ) the chain is Cytoplasmic. The chain crosses the membrane as a helical span at residues 58–78 (LHHPMYFFLSHLASVDIGYSS). The Extracellular portion of the chain corresponds to 79-102 (SVTPNMLANFLVEKNTISYLGCTI). A disulfide bond links Cys-100 and Cys-192. The chain crosses the membrane as a helical span at residues 103-123 (QLSLAAFCGTVECFLLATMAY). Residues 124 to 136 (DRFMAICSPLLYS) lie on the Cytoplasmic side of the membrane. A helical transmembrane segment spans residues 137-157 (TKMSTQVCIQLIVGSYIGGFL). Over 158–199 (NASSFTLFFLSFLFCGPNRINHFYCDFAPLVALSCSDVSVSE) the chain is Extracellular. Residues 200–220 (VVTSFFSGSVTMITMLVIAIS) form a helical membrane-spanning segment. Over 221–240 (YTYILITILKMRSTEGRHKA) the chain is Cytoplasmic. The chain crosses the membrane as a helical span at residues 241–261 (FSTCTSHLTAVTLFYGTITFI). At 262–274 (YVMPKSSFSTDQN) the chain is on the extracellular side. The helical transmembrane segment at 275-295 (KVVSVFYMVVIPMLNPLIYSL) threads the bilayer. Residues 296–314 (RNNEIKDALKRHLGKKIFS) are Cytoplasmic-facing.

Belongs to the G-protein coupled receptor 1 family.

The protein resides in the cell membrane. Potential odorant receptor. The sequence is that of Olfactory receptor 5P68 from Mus musculus (Mouse).